Consider the following 57-residue polypeptide: Potassium channel toxin alpha-KTx 26.1 (57 aa).

A signal peptide spans methionine 1–serine 22. 3 cysteine pairs are disulfide-bonded: cysteine 30-cysteine 48, cysteine 34-cysteine 53, and cysteine 38-cysteine 55.

Belongs to the short scorpion toxin superfamily. Potassium channel inhibitor family. Alpha-KTx 26 subfamily. In terms of tissue distribution, expressed by the venom gland.

Its subcellular location is the secreted. Its function is as follows. Recombinant toxin that reversibly inhibits the potassium current of mKv1.3/KCNA3 channel stably expressed in COS7 cells (IC(50)=150 nM). Also shows a weak inhibition on Kv1.2/KCNA2, Kv1.3/KCNA3 and TRPV1 channels. The polypeptide is Potassium channel toxin alpha-KTx 26.1 (Olivierus martensii (Manchurian scorpion)).